We begin with the raw amino-acid sequence, 92 residues long: Acyl-CoA-binding protein (92 aa).

The region spanning 3 to 88 is the ACB domain; it reads LKEDFEEHAE…VKQLLEAEAS (86 aa). An acyl-CoA-binding positions include 30–34, Lys-56, and Tyr-75; that span reads YGLYK.

The protein belongs to the ACBP family.

Functionally, binds medium- and long-chain acyl-CoA esters with very high affinity and may function as an intracellular carrier of acyl-CoA esters. This Brassica napus (Rape) protein is Acyl-CoA-binding protein.